A 502-amino-acid polypeptide reads, in one-letter code: Ubiquitin-associated protein 1 (502 aa).

The interaction with ESCRT-I stretch occupies residues 1–95 (MASKKLGADF…AEAKVNSKSG (95 aa)). The UMA domain maps to 17 to 63 (LDDVPFKTGDKFKTPAKVGLPIGFSLPDCLQVVREVQYDFSLEKKTI). Residues 86-100 (AEAKVNSKSGPEGDS) are compositionally biased toward basic and acidic residues. The segment at 86 to 117 (AEAKVNSKSGPEGDSKMSFSKTHSTATMPPPI) is disordered. Residues 102–112 (MSFSKTHSTAT) are compositionally biased toward polar residues. Phosphoserine occurs at positions 146, 205, and 289. The segment at 260–290 (VSNIKSLSFPKLDSDDSNQKTAKLASTFHST) is interaction with PTPN23. UBA domains lie at 389–430 (SPSE…LFAH) and 451–498 (QCSE…LMAR).

As to quaternary structure, component of an ESCRT-I complex (endosomal sorting complex required for transport I) which consists of TSG101, VPS28, VPS37A and UBAP1 in a 1:1:1:1 stoichiometry. Interacts with PTPN23. Interacts (via UBA domains) with ubiquitinated proteins. Ubiquitous. Highly expressed in heart, brain, placenta, lung, liver, skeletal muscle and pancreas.

It is found in the cytoplasm. The protein localises to the cytosol. Its subcellular location is the endosome. In terms of biological role, component of the ESCRT-I complex, a regulator of vesicular trafficking process. Binds to ubiquitinated cargo proteins and is required for the sorting of endocytic ubiquitinated cargos into multivesicular bodies (MVBs). Plays a role in the proteasomal degradation of ubiquitinated cell-surface proteins, such as EGFR and BST2. The chain is Ubiquitin-associated protein 1 from Homo sapiens (Human).